A 518-amino-acid chain; its full sequence is 2-isopropylmalate synthase (518 aa).

The Pyruvate carboxyltransferase domain maps to 5–268 (IIIFDTTLRD…DTRINTQEIH (264 aa)). Mn(2+)-binding residues include D14, H202, H204, and N238. A regulatory domain region spans residues 393-518 (TLDVITSQCI…DLKLHKIAGV (126 aa)).

Belongs to the alpha-IPM synthase/homocitrate synthase family. LeuA type 1 subfamily. In terms of assembly, homodimer. Mn(2+) serves as cofactor.

The protein localises to the cytoplasm. It carries out the reaction 3-methyl-2-oxobutanoate + acetyl-CoA + H2O = (2S)-2-isopropylmalate + CoA + H(+). Its pathway is amino-acid biosynthesis; L-leucine biosynthesis; L-leucine from 3-methyl-2-oxobutanoate: step 1/4. Functionally, catalyzes the condensation of the acetyl group of acetyl-CoA with 3-methyl-2-oxobutanoate (2-ketoisovalerate) to form 3-carboxy-3-hydroxy-4-methylpentanoate (2-isopropylmalate). The polypeptide is 2-isopropylmalate synthase (Pasteurella multocida (strain Pm70)).